A 109-amino-acid polypeptide reads, in one-letter code: Parvalbumin, muscle (109 aa).

At Ala-1 the chain carries N-acetylalanine. EF-hand domains follow at residues 38–73 and 77–109; these read KSPE…FTPD and LSDK…VAES. Ca(2+)-binding residues include Asp-51, Asp-53, Ser-55, Glu-62, Asp-90, Asp-92, Asp-94, Lys-96, and Glu-101.

This sequence belongs to the parvalbumin family.

Functionally, in muscle, parvalbumin is thought to be involved in relaxation after contraction. It binds two calcium ions. The polypeptide is Parvalbumin, muscle (Gallus gallus (Chicken)).